The chain runs to 315 residues: Beta-ketoacyl-[acyl-carrier-protein] synthase III (315 aa).

Active-site residues include Cys-115 and His-244. An ACP-binding region spans residues 245 to 249 (QANAR). Asn-274 is an active-site residue.

It belongs to the thiolase-like superfamily. FabH family. As to quaternary structure, homodimer.

The protein resides in the cytoplasm. It catalyses the reaction malonyl-[ACP] + acetyl-CoA + H(+) = 3-oxobutanoyl-[ACP] + CO2 + CoA. It functions in the pathway lipid metabolism; fatty acid biosynthesis. Its function is as follows. Catalyzes the condensation reaction of fatty acid synthesis by the addition to an acyl acceptor of two carbons from malonyl-ACP. Catalyzes the first condensation reaction which initiates fatty acid synthesis and may therefore play a role in governing the total rate of fatty acid production. Possesses both acetoacetyl-ACP synthase and acetyl transacylase activities. Its substrate specificity determines the biosynthesis of branched-chain and/or straight-chain of fatty acids. The sequence is that of Beta-ketoacyl-[acyl-carrier-protein] synthase III from Rubrobacter xylanophilus (strain DSM 9941 / JCM 11954 / NBRC 16129 / PRD-1).